The chain runs to 227 residues: PKHD-type hydroxylase ACIAD0531 (227 aa).

The region spanning 78 to 178 (HIIPPLFNRY…RFASFFWVQS (101 aa)) is the Fe2OG dioxygenase domain. Fe cation contacts are provided by His-96, Asp-98, and His-159. Arg-169 serves as a coordination point for 2-oxoglutarate.

Fe(2+) is required as a cofactor. It depends on L-ascorbate as a cofactor.

This chain is PKHD-type hydroxylase ACIAD0531, found in Acinetobacter baylyi (strain ATCC 33305 / BD413 / ADP1).